The chain runs to 631 residues: Pescadillo homolog (631 aa).

The BRCT domain maps to 321-414 (RLRNLFKGLK…QLLPTNKYFL (94 aa)). 2 disordered regions span residues 450-469 (HAQS…EDDT) and 489-569 (EYKK…MVKP). A phosphoserine mark is found at S453 and S457. 2 stretches are compositionally biased toward acidic residues: residues 454–469 (DDES…EDDT) and 499–524 (VNED…EELD). Residues 510–541 (FDGEQESDEEEEELDEKTKRLQEEKKKMSVQS) are a coiled coil. Over residues 525 to 536 (EKTKRLQEEKKK) the composition is skewed to basic and acidic residues. Over residues 543 to 552 (KVHKVNKRQL) the composition is skewed to basic residues. Residues 553-562 (HKAEVDEHRL) are compositionally biased toward basic and acidic residues.

This sequence belongs to the pescadillo family.

Its subcellular location is the nucleus. The protein localises to the nucleolus. The protein resides in the nucleoplasm. Required for maturation of ribosomal RNAs and formation of the large ribosomal subunit. This is Pescadillo homolog from Drosophila mojavensis (Fruit fly).